We begin with the raw amino-acid sequence, 609 residues long: Granule-bound starch synthase 1, chloroplastic/amyloplastic (609 aa).

Residues 1–77 (MSALTTSQLA…SRRFPSVVVY (77 aa)) constitute a chloroplast transit peptide. The disordered stretch occupies residues 29–67 (RHGFQGLKPRSPAGGDATSLSVTTSARATPKQQRSVQRG). Over residues 46–66 (TSLSVTTSARATPKQQRSVQR) the composition is skewed to polar residues. Lys97 is an ADP-alpha-D-glucose binding site. ADP-binding residues include Gly100, Arg408, Lys413, Lys462, and Gln493. A disulfide bridge connects residues Cys337 and Cys529.

This sequence belongs to the glycosyltransferase 1 family. Bacterial/plant glycogen synthase subfamily.

The protein localises to the plastid. The protein resides in the chloroplast. It localises to the amyloplast. The catalysed reaction is an NDP-alpha-D-glucose + [(1-&gt;4)-alpha-D-glucosyl](n) = [(1-&gt;4)-alpha-D-glucosyl](n+1) + a ribonucleoside 5'-diphosphate + H(+). The protein operates within glycan biosynthesis; starch biosynthesis. In terms of biological role, required for the synthesis of amylose in endosperm. This is Granule-bound starch synthase 1, chloroplastic/amyloplastic (WAXY) from Oryza sativa subsp. indica (Rice).